A 184-amino-acid polypeptide reads, in one-letter code: Large ribosomal subunit protein uL6 (184 aa).

It belongs to the universal ribosomal protein uL6 family. Part of the 50S ribosomal subunit.

In terms of biological role, this protein binds to the 23S rRNA, and is important in its secondary structure. It is located near the subunit interface in the base of the L7/L12 stalk, and near the tRNA binding site of the peptidyltransferase center. The sequence is that of Large ribosomal subunit protein uL6 from Pyrococcus furiosus (strain ATCC 43587 / DSM 3638 / JCM 8422 / Vc1).